The primary structure comprises 547 residues: Chaperonin GroEL (547 aa).

ATP contacts are provided by residues 30-33, Lys51, 87-91, Gly415, and Asp495; these read TLGP and DGTTT.

Belongs to the chaperonin (HSP60) family. In terms of assembly, forms a cylinder of 14 subunits composed of two heptameric rings stacked back-to-back. Interacts with the co-chaperonin GroES.

The protein resides in the cytoplasm. The enzyme catalyses ATP + H2O + a folded polypeptide = ADP + phosphate + an unfolded polypeptide.. Its function is as follows. Together with its co-chaperonin GroES, plays an essential role in assisting protein folding. The GroEL-GroES system forms a nano-cage that allows encapsulation of the non-native substrate proteins and provides a physical environment optimized to promote and accelerate protein folding. This chain is Chaperonin GroEL, found in Thiobacillus denitrificans (strain ATCC 25259 / T1).